A 119-amino-acid chain; its full sequence is Small ribosomal subunit protein bS6 (119 aa).

A disordered region spans residues 95–119 (AVTEPSPLAKGNEKREDRKESEDAE). Residues 105–119 (GNEKREDRKESEDAE) show a composition bias toward basic and acidic residues.

The protein belongs to the bacterial ribosomal protein bS6 family.

Binds together with bS18 to 16S ribosomal RNA. This Halorhodospira halophila (strain DSM 244 / SL1) (Ectothiorhodospira halophila (strain DSM 244 / SL1)) protein is Small ribosomal subunit protein bS6.